The following is a 952-amino-acid chain: Bromodomain testis-specific protein (952 aa).

One can recognise a Bromo 1 domain in the interval 26-132 (RLTNQLQFLQ…KLFMQKLSQM (107 aa)). Residues 141–150 (GKERMKKDIQ) are compositionally biased toward basic and acidic residues. Residues 141 to 168 (GKERMKKDIQQKTAVSSAKEQTPSKSAE) are disordered. Polar residues predominate over residues 151-167 (QKTAVSSAKEQTPSKSA). A Phosphoserine modification is found at Ser-186. Residues 208–219 (KGVKRRADTTTP) carry the Nuclear localization signal motif. Residues 209-257 (GVKRRADTTTPTTSSAKASSESPPPLREAKPANAPVKENTVKSVLPDSQ) are disordered. Residues 216–229 (TTTPTTSSAKASSE) show a composition bias toward low complexity. One can recognise a Bromo 2 domain in the interval 266–375 (VKVTEQLKHC…DVFEMHFAKI (110 aa)). Disordered stretches follow at residues 392 to 420 (SAKA…ERVQ), 442 to 504 (VPLR…NAKP), 607 to 746 (QLNC…GCQV), and 850 to 930 (KHLE…RREA). Residues 417 to 442 (ERVQRLAKLQEQLNAVHQQLQVLSQV) are a coiled coil. Residues 445–463 (RKLKKKNEKSKRAPKRKKV) show a composition bias toward basic residues. The NET domain maps to 495–577 (KLEEEDNAKP…ACLRKRSLKP (83 aa)). Residues 610–619 (CRKRQTKRPA) are compositionally biased toward basic residues. The segment covering 625–638 (PRPPLPPPPPPPPE) has biased composition (pro residues). The segment covering 646-681 (SDSSSSSSSSGSGSSSSSSSSSGSGSSSSDSSSSDS) has biased composition (low complexity). Positions 718–729 (SAETALVQQSTG) are enriched in polar residues. Residues 837–936 (EKEVKARTQE…RREAMAGTID (100 aa)) are a coiled coil. Residues 850-867 (KHLEHSAKDPKVSQESQR) are compositionally biased toward basic and acidic residues. Residues 874 to 883 (TPESSSNKVQ) are compositionally biased toward polar residues. Low complexity predominate over residues 893 to 902 (EQQQLPSPSE). Over residues 911 to 930 (LLKDRNLAREKEQERRRREA) the composition is skewed to basic and acidic residues.

Belongs to the BET family. As to quaternary structure, interacts with the acetylated N-terminus of histone H1, H2, H3 and H4. Interacts with P-TEFb components CDK9 and CCNT1/cyclin-T1. Interacts with mRNA splicing machinery proteins SRSF2, DDX5, HNRNPK and TARDBP. Interacts with SMARCE1. Ubiquitinated in a SPOP-dependent manner, leading to proteasomal degradation.

It is found in the nucleus. In terms of biological role, testis-specific chromatin protein that specifically binds histone H4 acetylated at 'Lys-5' and 'Lys-8' (H4K5ac and H4K8ac, respectively) and plays a key role in spermatogenesis. Required in late pachytene spermatocytes: plays a role in meiotic and post-meiotic cells by binding to acetylated histones at the promoter of specific meiotic and post-meiotic genes, facilitating their activation at the appropriate time. In the post-meiotic phase of spermatogenesis, binds to hyperacetylated histones and participates in their general removal from DNA. Also recognizes and binds a subset of butyrylated histones: able to bind histone H4 butyrylated at 'Lys-8' (H4K8ac), while it is not able to bind H4 butyrylated at 'Lys-5' (H4K5ac). Also acts as a component of the splicing machinery in pachytene spermatocytes and round spermatids and participates in 3'-UTR truncation of specific mRNAs in post-meiotic spermatids. Required for chromocenter organization, a structure comprised of peri-centromeric heterochromatin. The protein is Bromodomain testis-specific protein (Brdt) of Rattus norvegicus (Rat).